Here is a 184-residue protein sequence, read N- to C-terminus: uncharacterized protein (184 aa).

It belongs to the PhzF family.

The protein resides in the cytoplasm. The protein localises to the nucleus. This is an uncharacterized protein from Schizosaccharomyces pombe (strain 972 / ATCC 24843) (Fission yeast).